The following is a 337-amino-acid chain: Anthranilate phosphoribosyltransferase (337 aa).

5-phospho-alpha-D-ribose 1-diphosphate is bound by residues G82, 85-86, T90, 92-95, 110-118, and S122; these read GD, NIST, and KHGGRSVSS. Anthranilate is bound at residue G82. S94 contacts Mg(2+). An anthranilate-binding site is contributed by R168. Positions 226 and 227 each coordinate Mg(2+).

Belongs to the anthranilate phosphoribosyltransferase family. Homodimer. Mg(2+) is required as a cofactor.

It catalyses the reaction N-(5-phospho-beta-D-ribosyl)anthranilate + diphosphate = 5-phospho-alpha-D-ribose 1-diphosphate + anthranilate. It participates in amino-acid biosynthesis; L-tryptophan biosynthesis; L-tryptophan from chorismate: step 2/5. Catalyzes the transfer of the phosphoribosyl group of 5-phosphorylribose-1-pyrophosphate (PRPP) to anthranilate to yield N-(5'-phosphoribosyl)-anthranilate (PRA). This Francisella tularensis subsp. novicida (strain U112) protein is Anthranilate phosphoribosyltransferase.